A 116-amino-acid polypeptide reads, in one-letter code: Non-specific lipid-transfer protein (116 aa).

The first 25 residues, 1–25 (MASMVMNVLCVAVACMVFSASYADA), serve as a signal peptide directing secretion. Intrachain disulfides connect Cys28-Cys75, Cys38-Cys52, Cys53-Cys98, and Cys73-Cys112.

The protein belongs to the plant LTP family.

Plant non-specific lipid-transfer proteins transfer phospholipids as well as galactolipids across membranes. May play a role in wax or cutin deposition in the cell walls of expanding epidermal cells and certain secretory tissues. This chain is Non-specific lipid-transfer protein, found in Gerbera hybrida (Daisy).